A 1273-amino-acid chain; its full sequence is Kinesin-like protein KIN-7O (1273 aa).

The Kinesin motor domain maps to 3–327; it reads RIHVSVRARP…LQFASRALRV (325 aa). 79–86 contacts ATP; sequence GQTNSGKT. Residues 333–408 are a coiled coil; sequence VNEILTDAAL…QRERVLQEQA (76 aa). The interval 452-474 is disordered; it reads SEDQSNVLSRGSSLESARSERET. The span at 453-467 shows a compositional bias: polar residues; the sequence is EDQSNVLSRGSSLES. Coiled coils occupy residues 602–674 and 751–1023; these read EAIL…ESEV and VQSS…MEEE.

The protein belongs to the TRAFAC class myosin-kinesin ATPase superfamily. Kinesin family. KIN-7 subfamily.

This chain is Kinesin-like protein KIN-7O, found in Arabidopsis thaliana (Mouse-ear cress).